A 523-amino-acid chain; its full sequence is Protein tweety homolog 3 (523 aa).

Residues 1-42 are Extracellular-facing; that stretch reads MAGVSYAAPWWVSLLHRLPHFDLSWEATSSQFRPEDTDYQQA. The chain crosses the membrane as a helical span at residues 43–63; that stretch reads LLLLGAAALACLALDLLFLLF. The Cytoplasmic segment spans residues 64-86; that stretch reads YSFWLCCRRRKSEEHLDADCCCT. The chain crosses the membrane as a helical span at residues 87–107; sequence AWCVIIATLVCSAGIAVGFYG. The Extracellular portion of the chain corresponds to 108–211; that stretch reads NGETSDGIHR…VDLYDWYRWL (104 aa). The Ca(2+) site is built by Glu110 and Asp113. N-linked (GlcNAc...) asparagine glycosylation is found at Asn126 and Asn144. The chain crosses the membrane as a helical span at residues 212–232; the sequence is GYLGLLLLDVIICLLVLVGLI. Residues 233–236 lie on the Cytoplasmic side of the membrane; that stretch reads RSSK. The helical transmembrane segment at 237 to 257 threads the bilayer; sequence GILVGVCLLGVLALVISWGAL. Residues 258-386 lie on the Extracellular side of the membrane; it reads GLELAVSVGS…LTGFCYDGVE (129 aa). 2 disulfide bridges follow: Cys271–Cys381 and Cys299–Cys366. A glycan (N-linked (GlcNAc...) asparagine) is linked at Asn351. The chain crosses the membrane as a helical span at residues 387–407; the sequence is GLIYLALFSFVTALMFSSIVC. Over 408–523 the chain is Cytoplasmic; it reads SVPHTWQQKR…QPRPDSSGSH (116 aa). Disordered stretches follow at residues 413–435 and 482–523; these read WQQKRGPDEDGEEEAAPGPRQAH and QNPR…SGSH. Position 496 is a phosphoserine (Ser496). A PY-motif; mediates interaction with NEDD4L motif is present at residues 498 to 501; that stretch reads PPSY. A compositionally biased stretch (polar residues) spans 501-523; it reads YTSSMRAKYLATSQPRPDSSGSH. Phosphoserine is present on residues Ser504 and Ser522.

It belongs to the tweety family. In terms of assembly, homotetramer; disulfide-linked. Homodimer. Interacts with NEDD4L. In terms of processing, ubiquitinated by NEDD4L. Post-translationally, N-Glycosylated. Contains high-mannose, hybrid and complex oligosaccharides. Expressed in excitable tissues. Expressed in the brain, heart, skeletal muscle, colon, spleen, kidney and peripheral blood leukocytes.

The protein localises to the cell membrane. The enzyme catalyses chloride(in) = chloride(out). It catalyses the reaction L-glutamate(out) = L-glutamate(in). Calcium-independent, swelling-dependent volume-regulated anion channel (VRAC-swell) which plays a pivotal role in the process of regulatory volume decrease (RVD) in the brain through the efflux of anions like chloride and organic osmolytes like glutamate. Probable large-conductance Ca(2+)-activated chloride channel. This is Protein tweety homolog 3 (TTYH3) from Homo sapiens (Human).